An 83-amino-acid polypeptide reads, in one-letter code: Normal mucosa of esophagus-specific gene 1 protein (83 aa).

It belongs to the complex I NDUFA4 subunit family.

It localises to the nucleus. This is Normal mucosa of esophagus-specific gene 1 protein (Nmes1) from Rattus norvegicus (Rat).